The sequence spans 220 residues: ATP phosphoribosyltransferase (220 aa).

Belongs to the ATP phosphoribosyltransferase family. Short subfamily. In terms of assembly, heteromultimer composed of HisG and HisZ subunits.

It localises to the cytoplasm. It carries out the reaction 1-(5-phospho-beta-D-ribosyl)-ATP + diphosphate = 5-phospho-alpha-D-ribose 1-diphosphate + ATP. It participates in amino-acid biosynthesis; L-histidine biosynthesis; L-histidine from 5-phospho-alpha-D-ribose 1-diphosphate: step 1/9. Functionally, catalyzes the condensation of ATP and 5-phosphoribose 1-diphosphate to form N'-(5'-phosphoribosyl)-ATP (PR-ATP). Has a crucial role in the pathway because the rate of histidine biosynthesis seems to be controlled primarily by regulation of HisG enzymatic activity. In Janthinobacterium sp. (strain Marseille) (Minibacterium massiliensis), this protein is ATP phosphoribosyltransferase.